Consider the following 196-residue polypeptide: uncharacterized protein (196 aa).

A helical membrane pass occupies residues 26–46; it reads ITFFFILLICFICILLLLAIF.

It localises to the membrane. This is an uncharacterized protein from Mus musculus (Mouse).